A 441-amino-acid chain; its full sequence is N-succinylarginine dihydrolase (441 aa).

Residues 19–28 (AGLSFGNEAS), asparagine 110, and 137–138 (HR) contribute to the substrate site. The active site involves glutamate 174. Arginine 212 contacts substrate. The active site involves histidine 248. Substrate contacts are provided by aspartate 250 and asparagine 359. Catalysis depends on cysteine 365, which acts as the Nucleophile.

The protein belongs to the succinylarginine dihydrolase family. As to quaternary structure, homodimer.

The enzyme catalyses N(2)-succinyl-L-arginine + 2 H2O + 2 H(+) = N(2)-succinyl-L-ornithine + 2 NH4(+) + CO2. It functions in the pathway amino-acid degradation; L-arginine degradation via AST pathway; L-glutamate and succinate from L-arginine: step 2/5. Catalyzes the hydrolysis of N(2)-succinylarginine into N(2)-succinylornithine, ammonia and CO(2). The sequence is that of N-succinylarginine dihydrolase from Erwinia tasmaniensis (strain DSM 17950 / CFBP 7177 / CIP 109463 / NCPPB 4357 / Et1/99).